Reading from the N-terminus, the 192-residue chain is uncharacterized protein (192 aa).

A Nudix hydrolase domain is found at 29–160 (RRQAAVLIPV…PLDIYRRGDS (132 aa)). Positions 67 to 89 (GAVDSSDASLIAAALREAQEEVA) match the Nudix box motif. Positions 83 and 87 each coordinate Mg(2+).

This sequence belongs to the Nudix hydrolase family. PCD1 subfamily. Mn(2+) is required as a cofactor. Requires Mg(2+) as cofactor.

Functionally, probably mediates the hydrolysis of some nucleoside diphosphate derivatives. This is an uncharacterized protein from Citrobacter koseri (strain ATCC BAA-895 / CDC 4225-83 / SGSC4696).